We begin with the raw amino-acid sequence, 240 residues long: Methylthioribulose-1-phosphate dehydratase (240 aa).

Cys99 contributes to the substrate binding site. Zn(2+) contacts are provided by His116 and His118. Glu145 functions as the Proton donor/acceptor in the catalytic mechanism. His201 provides a ligand contact to Zn(2+).

Belongs to the aldolase class II family. MtnB subfamily. Zn(2+) is required as a cofactor.

The protein localises to the cytoplasm. It carries out the reaction 5-(methylsulfanyl)-D-ribulose 1-phosphate = 5-methylsulfanyl-2,3-dioxopentyl phosphate + H2O. It participates in amino-acid biosynthesis; L-methionine biosynthesis via salvage pathway; L-methionine from S-methyl-5-thio-alpha-D-ribose 1-phosphate: step 2/6. Functionally, catalyzes the dehydration of methylthioribulose-1-phosphate (MTRu-1-P) into 2,3-diketo-5-methylthiopentyl-1-phosphate (DK-MTP-1-P). In Paracoccidioides brasiliensis (strain Pb03), this protein is Methylthioribulose-1-phosphate dehydratase.